The following is a 528-amino-acid chain: UDP-glucuronosyltransferase 2B10 (528 aa).

The N-terminal stretch at 1 to 23 (MALKWTTVLLIQLSFYFSSGSCG) is a signal peptide. An N-linked (GlcNAc...) asparagine glycan is attached at Asn-66. Residue Lys-134 is modified to N6-succinyllysine. N-linked (GlcNAc...) asparagine glycosylation is found at Asn-314 and Asn-481. A helical membrane pass occupies residues 492-512 (VIGFLLACVATVLFIITKCCL).

The protein belongs to the UDP-glycosyltransferase family.

It localises to the microsome membrane. Its subcellular location is the endoplasmic reticulum membrane. The catalysed reaction is glucuronate acceptor + UDP-alpha-D-glucuronate = acceptor beta-D-glucuronoside + UDP + H(+). In terms of biological role, UDPGT is of major importance in the conjugation and subsequent elimination of potentially toxic xenobiotics and endogenous compounds. The sequence is that of UDP-glucuronosyltransferase 2B10 (UGT2B10) from Homo sapiens (Human).